Reading from the N-terminus, the 131-residue chain is Profilin-3 (131 aa).

It belongs to the profilin family. In terms of assembly, occurs in many kinds of cells as a complex with monomeric actin in a 1:1 ratio.

Its subcellular location is the cytoplasm. It is found in the cytoskeleton. Its function is as follows. Binds to actin and affects the structure of the cytoskeleton. At high concentrations, profilin prevents the polymerization of actin, whereas it enhances it at low concentrations. By binding to PIP2, it inhibits the formation of IP3 and DG. The chain is Profilin-3 from Lilium longiflorum (Trumpet lily).